The sequence spans 57 residues: UPF0391 membrane protein Arad_3976 (57 aa).

The next 2 helical transmembrane spans lie at 4-24 (WAII…SGVS) and 33-53 (VLFA…VMAG).

This sequence belongs to the UPF0391 family.

Its subcellular location is the cell membrane. The chain is UPF0391 membrane protein Arad_3976 from Rhizobium rhizogenes (strain K84 / ATCC BAA-868) (Agrobacterium radiobacter).